The primary structure comprises 288 residues: 4-hydroxybenzoate octaprenyltransferase (288 aa).

8 consecutive transmembrane segments (helical) span residues 23–43 (IGSLLLLWPTLWALWLAGRGI), 46–66 (AKILVVFVLGVFFMRAAGCVV), 98–118 (ILFVVLILLSFGLVLTLNSMT), 141–161 (LPQVVLGAAFGWSIPMGFAAV), 163–183 (ESLPLVCWLLLLANICWTVAY), 213–233 (LIIGLLQLATLLLMVAIGWLM), 234–254 (NLGGAFYWSILLAGALFTHQQ), and 268–288 (AFLNNNYVGLVLFLGILISYW).

It belongs to the UbiA prenyltransferase family. Requires Mg(2+) as cofactor.

The protein resides in the cell inner membrane. The catalysed reaction is all-trans-octaprenyl diphosphate + 4-hydroxybenzoate = 4-hydroxy-3-(all-trans-octaprenyl)benzoate + diphosphate. It functions in the pathway cofactor biosynthesis; ubiquinone biosynthesis. Catalyzes the prenylation of para-hydroxybenzoate (PHB) with an all-trans polyprenyl group. Mediates the second step in the final reaction sequence of ubiquinone-8 (UQ-8) biosynthesis, which is the condensation of the polyisoprenoid side chain with PHB, generating the first membrane-bound Q intermediate 3-octaprenyl-4-hydroxybenzoate. This chain is 4-hydroxybenzoate octaprenyltransferase, found in Yersinia pestis bv. Antiqua (strain Antiqua).